Here is a 244-residue protein sequence, read N- to C-terminus: Protein crossbronx (244 aa).

One can recognise a UBC core domain in the interval 20–176 (QQEYKILAEY…VQKNIKESKE (157 aa)). The interval 209–244 (AGRSKQTEPSAQQANGGHATGLSWVKEGEFKPLSIE) is disordered.

It belongs to the ubiquitin-conjugating enzyme family. FTS subfamily.

The sequence is that of Protein crossbronx (cbx) from Drosophila erecta (Fruit fly).